The primary structure comprises 1077 residues: Rap guanine nucleotide exchange factor 1 (1077 aa).

A Glycyl lysine isopeptide (Lys-Gly) (interchain with G-Cter in SUMO2) cross-link involves residue Leu-57. Disordered regions lie at residues 207 to 235 and 248 to 300; these read IEKQ…AELP and TGMS…PTRV. A compositionally biased stretch (low complexity) spans 213-228; that stretch reads PSPTSPVKPSSPASKP. A phosphoserine mark is found at Ser-281, Ser-293, Ser-314, Ser-335, and Ser-360. An SH3-binding motif is present at residues 281-292; the sequence is SPPPALPPKKRQ. Disordered regions lie at residues 336–376 and 411–494; these read GGSH…QCSR and LSPL…EDLQ. Over residues 358–371 the composition is skewed to basic and acidic residues; it reads SKSDEQLSSLDRDS. The SH3-binding signature appears at 451–462; the sequence is DTPPALPEKKRR. A compositionally biased stretch (polar residues) spans 484-494; sequence QYDNISGEDLQ. A Phosphotyrosine; by HCK modification is found at Tyr-504. Short sequence motifs (SH3-binding) lie at residues 538-549 and 606-617; these read EKPPPLPEKKNK and APPPALPPKQRQ. Residues 600–670 form a disordered region; it reads DSVQELAPPP…SEEEVDELSL (71 aa). A compositionally biased stretch (basic and acidic residues) spans 640–651; sequence KDSRDGSERAPK. The span at 660–669 shows a compositional bias: acidic residues; sequence QSEEEVDELS. Residues 688–810 form the N-terminal Ras-GEF domain; it reads DGPDVRGGSG…LRKNILDKVD (123 aa). One can recognise a Ras-GEF domain in the interval 840-1064; the sequence is HSHEIAEQLT…WELSLKIKPR (225 aa).

Interacts with HCK (via SH3-binding sites). Interacts with CRK (via SH3-binding sites). Post-translationally, phosphorylation at Tyr-504 enhances activity as Rap guanine nucleotide exchange factor. As to expression, ubiquitously expressed in adult and fetus. Expression is high in adult skeletal muscle and placenta and in fetal brain and heart. Low levels of expression in adult and fetal liver.

The protein resides in the early endosome. Functionally, guanine nucleotide-releasing protein that binds to SH3 domain of CRK and GRB2/ASH. Transduces signals from CRK to activate RAS. Involved in cell branching and adhesion mediated by BCAR1-CRK-RAPGEF1 signaling and activation of RAP1. Plays a role in the establishment of basal endothelial barrier function. Plays a role in nerve growth factor (NGF)-induced sustained activation of Rap1 and neurite outgrowth. The sequence is that of Rap guanine nucleotide exchange factor 1 (RAPGEF1) from Homo sapiens (Human).